Consider the following 343-residue polypeptide: DNA polymerase III subunit delta (343 aa).

Domain regions lie at residues 1–140 (MIRL…VTCQ), 141–210 (TPEQ…NDAA), and 211–343 (HFTP…FIDG).

Belongs to the DNA polymerase HolA subunit family. In terms of assembly, the DNA polymerase III holoenzyme complex contains at least 10 different subunits organized into 3 functionally essential subassemblies: the Pol III core, the beta sliding clamp processivity factor and the clamp-loading complex. The Pol III core (subunits alpha, epsilon and theta) contains the polymerase and the 3'-5' exonuclease proofreading activities. The polymerase is tethered to the template via the dimeric beta sliding clamp processivity factor. The clamp-loading complex (also called gamma complex) assembles the beta sliding clamp onto the primed template and plays a central role in the organization and communication at the replication fork. The clamp-loading complex contains delta, delta', psi and chi, and 3 copies of either or both of two different DnaX proteins, gamma and tau. The DNA replisome complex has a single clamp loader (3 tau and 1 each of delta, delta', psi and chi subunits) which binds 3 Pol III cores (1 core on the leading strand and 2 on the lagging strand) each with a beta sliding clamp dimer. Additional proteins in the replisome are other copies of gamma, psi and chi, Ssb, DNA helicase and RNA primase. The clamp loader hydrolyzes ATP to assemble the beta processivity factor onto the primed template and plays a central role in the organization and communication at the replication fork; the minimal complex to load the beta sliding clamp on DNA is delta, delta', gamma.

It carries out the reaction DNA(n) + a 2'-deoxyribonucleoside 5'-triphosphate = DNA(n+1) + diphosphate. Its function is as follows. Part of the beta sliding clamp loading complex, which hydrolyzes ATP to load the beta clamp onto primed DNA to form the DNA replication pre-initiation complex. DNA polymerase III is a complex, multichain enzyme responsible for most of the replicative synthesis in bacteria. This DNA polymerase also exhibits 3'-5' exonuclease activity. The delta subunit is the wrench that will open the beta subunit dimer, which has been modeled to leave a gap large enough for ssDNA to pass through. The gamma complex (gamma(3),delta,delta') is thought to load beta dimers onto DNA by binding ATP which alters the complex's conformation so it can bind beta sliding clamp dimers and open them at one interface. Primed DNA is recognized, ATP is hydrolyzed releasing the gamma complex and closing the beta sliding clamp ring around the primed DNA. This chain is DNA polymerase III subunit delta (holA), found in Escherichia coli (strain K12).